A 202-amino-acid polypeptide reads, in one-letter code: Holliday junction branch migration complex subunit RuvA (202 aa).

A domain I region spans residues 1 to 64 (MIDFLKGRLV…ETALEMFGFS (64 aa)). Residues 65-143 (SELDRTAFLL…KQQVAVSAEL (79 aa)) form a domain II region. Positions 144–152 (PASDGVPVL) are flexible linker. The tract at residues 152-202 (LAGRAENEALAALISLGYTPREAREALNRLPDRKLDAAGLVHAALRIMGSQ) is domain III.

The protein belongs to the RuvA family. In terms of assembly, homotetramer. Forms an RuvA(8)-RuvB(12)-Holliday junction (HJ) complex. HJ DNA is sandwiched between 2 RuvA tetramers; dsDNA enters through RuvA and exits via RuvB. An RuvB hexamer assembles on each DNA strand where it exits the tetramer. Each RuvB hexamer is contacted by two RuvA subunits (via domain III) on 2 adjacent RuvB subunits; this complex drives branch migration. In the full resolvosome a probable DNA-RuvA(4)-RuvB(12)-RuvC(2) complex forms which resolves the HJ.

Its subcellular location is the cytoplasm. Functionally, the RuvA-RuvB-RuvC complex processes Holliday junction (HJ) DNA during genetic recombination and DNA repair, while the RuvA-RuvB complex plays an important role in the rescue of blocked DNA replication forks via replication fork reversal (RFR). RuvA specifically binds to HJ cruciform DNA, conferring on it an open structure. The RuvB hexamer acts as an ATP-dependent pump, pulling dsDNA into and through the RuvAB complex. HJ branch migration allows RuvC to scan DNA until it finds its consensus sequence, where it cleaves and resolves the cruciform DNA. This is Holliday junction branch migration complex subunit RuvA from Desulforudis audaxviator (strain MP104C).